Here is a 379-residue protein sequence, read N- to C-terminus: MPTAFPPDSVGLVVPQMAHFSEPLALACGRSLPAYDLIYETYGQLNATASNAVLICHALSGHHHAAGFHSVDERKPGWWDSCIGPGKPIDTNKFFVVSLNNLGGCNGSTGPSSLNPENGKPFGADFPVLTVEDWVHSQARLADLLGIDQWAAVIGGSLGGMQALQWTITYPDRVRHCLAIASAPKLSAQNIAFNEVARQAILTDPEFHGGSFQEAGVIPKRGLMLARMVGHITYLSDDSMGEKFGRGLKSEKLNYDFHSVEFQVESYLRYQGEEFSGRFDANTYLLMTKALDYFDPAANFDDDLAKTFEGATAKFCVMSFTTDWRFSPARSRELVDALMAARKDVCYLEIDAPQGHDAFLIPIPRYLQAFSNYMNRITL.

The 310-residue stretch at 51–360 (NAVLICHALS…DAPQGHDAFL (310 aa)) folds into the AB hydrolase-1 domain. S157 (nucleophile) is an active-site residue. Residue R227 participates in substrate binding. Residues D323 and H356 contribute to the active site. Residue D357 participates in substrate binding.

Belongs to the AB hydrolase superfamily. MetX family. As to quaternary structure, homodimer.

The protein localises to the cytoplasm. It carries out the reaction L-homoserine + succinyl-CoA = O-succinyl-L-homoserine + CoA. It functions in the pathway amino-acid biosynthesis; L-methionine biosynthesis via de novo pathway; O-succinyl-L-homoserine from L-homoserine: step 1/1. Functionally, transfers a succinyl group from succinyl-CoA to L-homoserine, forming succinyl-L-homoserine. This Pseudomonas fluorescens (strain SBW25) protein is Homoserine O-succinyltransferase.